Reading from the N-terminus, the 185-residue chain is Transcription termination/antitermination protein NusG (185 aa).

Residues 134–162 form the KOW domain; the sequence is PGQMVRVIDGPFNDFDGLVEEVNYEKNRL.

This sequence belongs to the NusG family.

In terms of biological role, participates in transcription elongation, termination and antitermination. This chain is Transcription termination/antitermination protein NusG, found in Xylella fastidiosa (strain 9a5c).